We begin with the raw amino-acid sequence, 349 residues long: Uroporphyrinogen decarboxylase (349 aa).

Substrate-binding positions include 23–27, Asp-71, Tyr-148, Ser-203, and His-317; that span reads RQAGR.

It belongs to the uroporphyrinogen decarboxylase family. As to quaternary structure, homodimer.

It is found in the cytoplasm. The catalysed reaction is uroporphyrinogen III + 4 H(+) = coproporphyrinogen III + 4 CO2. It participates in porphyrin-containing compound metabolism; protoporphyrin-IX biosynthesis; coproporphyrinogen-III from 5-aminolevulinate: step 4/4. Catalyzes the decarboxylation of four acetate groups of uroporphyrinogen-III to yield coproporphyrinogen-III. The polypeptide is Uroporphyrinogen decarboxylase (Sorangium cellulosum (strain So ce56) (Polyangium cellulosum (strain So ce56))).